The following is a 276-amino-acid chain: Urease accessory protein UreD (276 aa).

It belongs to the UreD family. As to quaternary structure, ureD, UreF and UreG form a complex that acts as a GTP-hydrolysis-dependent molecular chaperone, activating the urease apoprotein by helping to assemble the nickel containing metallocenter of UreC. The UreE protein probably delivers the nickel.

It localises to the cytoplasm. In terms of biological role, required for maturation of urease via the functional incorporation of the urease nickel metallocenter. In Bradyrhizobium diazoefficiens (strain JCM 10833 / BCRC 13528 / IAM 13628 / NBRC 14792 / USDA 110), this protein is Urease accessory protein UreD.